A 179-amino-acid chain; its full sequence is ATP synthase subunit delta (179 aa).

This sequence belongs to the ATPase delta chain family. As to quaternary structure, F-type ATPases have 2 components, F(1) - the catalytic core - and F(0) - the membrane proton channel. F(1) has five subunits: alpha(3), beta(3), gamma(1), delta(1), epsilon(1). F(0) has three main subunits: a(1), b(2) and c(10-14). The alpha and beta chains form an alternating ring which encloses part of the gamma chain. F(1) is attached to F(0) by a central stalk formed by the gamma and epsilon chains, while a peripheral stalk is formed by the delta and b chains.

It localises to the cell membrane. Its function is as follows. F(1)F(0) ATP synthase produces ATP from ADP in the presence of a proton or sodium gradient. F-type ATPases consist of two structural domains, F(1) containing the extramembraneous catalytic core and F(0) containing the membrane proton channel, linked together by a central stalk and a peripheral stalk. During catalysis, ATP synthesis in the catalytic domain of F(1) is coupled via a rotary mechanism of the central stalk subunits to proton translocation. In terms of biological role, this protein is part of the stalk that links CF(0) to CF(1). It either transmits conformational changes from CF(0) to CF(1) or is implicated in proton conduction. This is ATP synthase subunit delta from Staphylococcus epidermidis (strain ATCC 35984 / DSM 28319 / BCRC 17069 / CCUG 31568 / BM 3577 / RP62A).